The following is a 557-amino-acid chain: Protein PECTIC ARABINOGALACTAN SYNTHESIS-RELATED (557 aa).

Positions 1–54 are disordered; it reads MAELRHSSSLGSRSSSSPLRAAGDEDSSSPHVHDHSPNGGDDEDGRPRHPSRDR. Residues 1–79 are Cytoplasmic-facing; sequence MAELRHSSSL…DPRVSPQKNK (79 aa). A compositionally biased stretch (low complexity) spans 7–20; sequence SSSLGSRSSSSPLR. The segment covering 45-54 has biased composition (basic and acidic residues); sequence GRPRHPSRDR. A helical; Signal-anchor for type II membrane protein membrane pass occupies residues 80–100; that stretch reads ISLLLILILAIASLISVYGII. At 101 to 557 the chain is on the lumenal side; sequence NHLNAPYLCK…NPLTPCMCKA (457 aa). N-linked (GlcNAc...) asparagine glycosylation is found at asparagine 156, asparagine 188, and asparagine 324. 336 to 338 serves as a coordination point for substrate; the sequence is HLR. Asparagine 375 carries an N-linked (GlcNAc...) asparagine glycan.

Belongs to the glycosyltransferase GT106 family. In terms of tissue distribution, widely expressed with the highest expression in reproductive tissues and roots.

It is found in the golgi apparatus membrane. It participates in glycan metabolism; pectin biosynthesis. Functionally, glycosyltransferase involved in the biosynthesis of pectic type-II arabinogalactans. This chain is Protein PECTIC ARABINOGALACTAN SYNTHESIS-RELATED, found in Arabidopsis thaliana (Mouse-ear cress).